Reading from the N-terminus, the 84-residue chain is Large ribosomal subunit protein bL27 (84 aa).

The interval 1 to 21 (MAHKKGGGSTKNGRDSNPKYL) is disordered.

Belongs to the bacterial ribosomal protein bL27 family.

This is Large ribosomal subunit protein bL27 from Pelodictyon phaeoclathratiforme (strain DSM 5477 / BU-1).